The primary structure comprises 1337 residues: Phosphoribosylformylglycinamidine synthase (1337 aa).

At Ser-215 the chain carries Phosphoserine. ATP-binding positions include 322-333 (GATTGTGGRIRD) and 402-404 (AGF). 2 positions are modified to phosphothreonine: Thr-619 and Thr-622. Residue Ala-705 coordinates ATP. 4 residues coordinate Mg(2+): Asp-706, Glu-745, Asn-749, and Asp-908. Ser-910 is a binding site for ATP. Residues 1063 to 1301 (RVAILREEGS…ALMPHPERAV (239 aa)) form the Glutamine amidotransferase type-1 domain. Cys-1157 (nucleophile) is an active-site residue. Residues His-1296 and Glu-1298 contribute to the active site.

In the N-terminal section; belongs to the FGAMS family.

Its subcellular location is the cytoplasm. The enzyme catalyses N(2)-formyl-N(1)-(5-phospho-beta-D-ribosyl)glycinamide + L-glutamine + ATP + H2O = 2-formamido-N(1)-(5-O-phospho-beta-D-ribosyl)acetamidine + L-glutamate + ADP + phosphate + H(+). Its pathway is purine metabolism; IMP biosynthesis via de novo pathway; 5-amino-1-(5-phospho-D-ribosyl)imidazole from N(2)-formyl-N(1)-(5-phospho-D-ribosyl)glycinamide: step 1/2. Its function is as follows. Phosphoribosylformylglycinamidine synthase involved in the purines biosynthetic pathway. Catalyzes the ATP-dependent conversion of formylglycinamide ribonucleotide (FGAR) and glutamine to yield formylglycinamidine ribonucleotide (FGAM) and glutamate. The protein is Phosphoribosylformylglycinamidine synthase (Pfas) of Mus musculus (Mouse).